A 637-amino-acid chain; its full sequence is Probable potassium transport system protein Kup 2 (637 aa).

12 consecutive transmembrane segments (helical) span residues 18 to 38 (FLVLLLGSIGVVYGDIGTSPL), 61 to 81 (LISLMIWTLTIIVTFKYVLFL), 107 to 127 (MPVLFFAGLIGSALFIGDAMI), 145 to 165 (PAFSDYVLPLSALIMVGLFAV), 174 to 194 (AVFFGPITVVWFLAMAWGGLI), 211 to 231 (ALWFITHAGWAGLIVLGAVFL), 255 to 275 (WFILVFPALALNYLGQGALVL), 293 to 313 (ALFPMIILATMATVIASQAVI), 345 to 365 (IYVPAVNMVLFIGVLVLIFSF), 371 to 391 (LATAYGISVTGAMVVTTLMAF), 402 to 422 (AFTAAILLAPLFSIEAVFLAA), and 429 to 449 (DGGWVPLALAGVIILVMWTWT).

It belongs to the HAK/KUP transporter (TC 2.A.72) family.

Its subcellular location is the cell inner membrane. It catalyses the reaction K(+)(in) + H(+)(in) = K(+)(out) + H(+)(out). In terms of biological role, transport of potassium into the cell. Likely operates as a K(+):H(+) symporter. The chain is Probable potassium transport system protein Kup 2 from Agrobacterium fabrum (strain C58 / ATCC 33970) (Agrobacterium tumefaciens (strain C58)).